A 154-amino-acid chain; its full sequence is Protein X (154 aa).

The interval 68–117 (PCALRFTSARRMETTVNAHQVLPKVLHKRTLGLSAMSTTDLEAYFKDCLF) is mitochondrial targeting sequence.

It belongs to the orthohepadnavirus protein X family. In terms of assembly, may form homodimer. May interact with host CEBPA, CFLAR, CREB1, DDB1, E4F1, HBXIP, HSPD1/HSP60, NFKBIA, POLR2E and SMAD4. Interacts with host SMC5-SMC6 complex and induces its degradation. Interacts with host TRPC4AP; leading to prevent ubiquitination of TRPC4AP. Interacts with host PLSCR1; this interaction promotes ubiquitination and degradation of HBx and impairs HBx-mediated cell proliferation. Post-translationally, a fraction may be phosphorylated in insect cells and HepG2 cells, a human hepatoblastoma cell line. Phosphorylated in vitro by host protein kinase C or mitogen-activated protein kinase. N-acetylated in insect cells.

The protein resides in the host cytoplasm. Its subcellular location is the host nucleus. The protein localises to the host mitochondrion. Its function is as follows. Multifunctional protein that plays a role in silencing host antiviral defenses and promoting viral transcription. Does not seem to be essential for HBV infection. May be directly involved in development of cirrhosis and liver cancer (hepatocellular carcinoma). Most of cytosolic activities involve modulation of cytosolic calcium. The effect on apoptosis is controversial depending on the cell types in which the studies have been conducted. May induce apoptosis by localizing in mitochondria and causing loss of mitochondrial membrane potential. May also modulate apoptosis by binding host CFLAR, a key regulator of the death-inducing signaling complex (DISC). Promotes viral transcription by using the host E3 ubiquitin ligase DDB1 to target the SMC5-SMC6 complex to proteasomal degradation. This host complex would otherwise bind to viral episomal DNA, and prevents its transcription. Moderately stimulates transcription of many different viral and cellular transcription elements. Promoters and enhancers stimulated by HBx contain DNA binding sites for NF-kappa-B, AP-1, AP-2, c-EBP, ATF/CREB, or the calcium-activated factor NF-AT. The sequence is that of Protein X from Hepatitis B virus genotype C subtype adr (isolate Japan/Nishioka/1983) (HBV-C).